The primary structure comprises 454 residues: Bifunctional protein GlmU (454 aa).

The pyrophosphorylase stretch occupies residues 1–226 (MSLEIVILAA…AMEVQGVNDR (226 aa)). Residues 8-11 (LAAG), Lys-22, Gln-73, 78-79 (GT), 99-101 (YGD), Gly-136, Glu-151, Asn-166, and Asn-224 contribute to the UDP-N-acetyl-alpha-D-glucosamine site. Asp-101 is a Mg(2+) binding site. Mg(2+) is bound at residue Asn-224. Residues 227–247 (MQQAQLERHYQRLRAEELMRQ) form a linker region. The segment at 248–454 (GVTLLDPQRL…NWKRPEKIKK (207 aa)) is N-acetyltransferase. 2 residues coordinate UDP-N-acetyl-alpha-D-glucosamine: Arg-330 and Lys-348. The Proton acceptor role is filled by His-360. Residues Tyr-363 and Asn-374 each contribute to the UDP-N-acetyl-alpha-D-glucosamine site. Acetyl-CoA is bound by residues Ala-377, 383–384 (NY), Ser-402, Ala-420, and Arg-437.

The protein in the N-terminal section; belongs to the N-acetylglucosamine-1-phosphate uridyltransferase family. It in the C-terminal section; belongs to the transferase hexapeptide repeat family. Homotrimer. Requires Mg(2+) as cofactor.

The protein localises to the cytoplasm. The catalysed reaction is alpha-D-glucosamine 1-phosphate + acetyl-CoA = N-acetyl-alpha-D-glucosamine 1-phosphate + CoA + H(+). The enzyme catalyses N-acetyl-alpha-D-glucosamine 1-phosphate + UTP + H(+) = UDP-N-acetyl-alpha-D-glucosamine + diphosphate. The protein operates within nucleotide-sugar biosynthesis; UDP-N-acetyl-alpha-D-glucosamine biosynthesis; N-acetyl-alpha-D-glucosamine 1-phosphate from alpha-D-glucosamine 6-phosphate (route II): step 2/2. Its pathway is nucleotide-sugar biosynthesis; UDP-N-acetyl-alpha-D-glucosamine biosynthesis; UDP-N-acetyl-alpha-D-glucosamine from N-acetyl-alpha-D-glucosamine 1-phosphate: step 1/1. It functions in the pathway bacterial outer membrane biogenesis; LPS lipid A biosynthesis. Its function is as follows. Catalyzes the last two sequential reactions in the de novo biosynthetic pathway for UDP-N-acetylglucosamine (UDP-GlcNAc). The C-terminal domain catalyzes the transfer of acetyl group from acetyl coenzyme A to glucosamine-1-phosphate (GlcN-1-P) to produce N-acetylglucosamine-1-phosphate (GlcNAc-1-P), which is converted into UDP-GlcNAc by the transfer of uridine 5-monophosphate (from uridine 5-triphosphate), a reaction catalyzed by the N-terminal domain. This Pseudomonas aeruginosa (strain ATCC 15692 / DSM 22644 / CIP 104116 / JCM 14847 / LMG 12228 / 1C / PRS 101 / PAO1) protein is Bifunctional protein GlmU.